The sequence spans 194 residues: dTTP/UTP pyrophosphatase (194 aa).

Aspartate 73 (proton acceptor) is an active-site residue.

The protein belongs to the Maf family. YhdE subfamily. It depends on a divalent metal cation as a cofactor.

It is found in the cytoplasm. It carries out the reaction dTTP + H2O = dTMP + diphosphate + H(+). The enzyme catalyses UTP + H2O = UMP + diphosphate + H(+). Nucleoside triphosphate pyrophosphatase that hydrolyzes dTTP and UTP. May have a dual role in cell division arrest and in preventing the incorporation of modified nucleotides into cellular nucleic acids. The chain is dTTP/UTP pyrophosphatase from Clostridium botulinum (strain Loch Maree / Type A3).